The primary structure comprises 616 residues: MNLINFSYLNLLFGAGLFSVLESATILNTESDAKKWLTTYNDEAGKYIYDATEAEWNYNTNLTDHNLGISIKKSNDLATFTEQKAIEANKKFVWKNFTDPLLKREFSKITDIGTASLSDEDFQKMSGLNSDLTKIYSTAKVCNKPNDPSGKCYPLDPDLSDIISKSNDLEELTWAWKGWRDASGKHMPDKYDEFVQLLNKAANINGYEDNGDYWRSWYESPTFRKDCEDLWQEIKPFYEQLHAYVRRKLQKKYPQIAFPKEGHIPAHLLGNMWAQSWENIEYLLRPAPDLPSMDITEELVKQNYTALKLFQLSDTFFKSLGLIQMPQPFWEKSMIEKPADRDVVCHASAWDFYNRKDFRIKQCTVVDMHWFMTTHHEMGHIEYYLHYKDQPISFRSGANPGFHEAIADIASLSVATPEYMQSVSLLPNFTDDPNGDLNFLMNQALTKVAFLPFGYLIDQWRWDVFSGDTPRPKYNSKWWHNRCKYQGVYPPVIRSEQDFDAGSKFHVPNNTPYIRYFVAHIIQFQFHEALCKAANNSRPLHRCNIANSKEAGKKLAELMKSGSSIPWPKVLENLTGSEKMSAKSLMAYYKPLIDWPEKRKPRAENWMGGKMSSWIV.

The first 23 residues, M1 to S23, serve as a signal peptide directing secretion. The region spanning L27–K610 is the Peptidase M2 domain. N-linked (GlcNAc...) asparagine glycans are attached at residues N61 and N96. C142 and C152 are oxidised to a cystine. Residues R180 and Y218 each coordinate chloride. N-linked (GlcNAc...) asparagine glycosylation is present at N303. C345 and C363 are joined by a disulfide. Zn(2+) is bound at residue H376. The active-site Proton acceptor is E377. Zn(2+) is bound by residues H380 and E404. N-linked (GlcNAc...) asparagine glycosylation is present at N428. Chloride-binding residues include W478 and R482. The active-site Proton donor is H506. R515 lines the chloride pocket. A disulfide bridge links C531 with C543. N-linked (GlcNAc...) asparagine glycans are attached at residues N535 and N573.

This sequence belongs to the peptidase M2 family. Requires Zn(2+) as cofactor. The cofactor is chloride. Epithelial cells of the midgut.

The protein resides in the secreted. It localises to the extracellular space. The enzyme catalyses Release of a C-terminal dipeptide, oligopeptide-|-Xaa-Yaa, when Xaa is not Pro, and Yaa is neither Asp nor Glu. Thus, conversion of angiotensin I to angiotensin II, with increase in vasoconstrictor activity, but no action on angiotensin II.. Its activity is regulated as follows. Activated by chloride. Inhibited by captopril and lisinopril, and to a lesser extent by delaprilat. This chain is Angiotensin-converting enzyme (ACE), found in Theromyzon tessulatum (Duck leech).